Consider the following 371-residue polypeptide: tRNA-specific 2-thiouridylase MnmA (371 aa).

ATP contacts are provided by residues 13-20 and Met-39; that span reads GMSGGVDS. The interval 99–101 is interaction with target base in tRNA; it reads NPD. Cys-104 functions as the Nucleophile in the catalytic mechanism. Cys-104 and Cys-200 are disulfide-bonded. Gly-128 is a binding site for ATP. Positions 150–152 are interaction with tRNA; the sequence is KDQ. Cys-200 serves as the catalytic Cysteine persulfide intermediate. The segment at 308-309 is interaction with tRNA; that stretch reads RY.

Belongs to the MnmA/TRMU family.

It is found in the cytoplasm. The enzyme catalyses S-sulfanyl-L-cysteinyl-[protein] + uridine(34) in tRNA + AH2 + ATP = 2-thiouridine(34) in tRNA + L-cysteinyl-[protein] + A + AMP + diphosphate + H(+). In terms of biological role, catalyzes the 2-thiolation of uridine at the wobble position (U34) of tRNA, leading to the formation of s(2)U34. In Bacillus thuringiensis (strain Al Hakam), this protein is tRNA-specific 2-thiouridylase MnmA.